Consider the following 101-residue polypeptide: Putative monooxygenase Rv0793 (101 aa).

One can recognise an ABM domain in the interval 5 to 93 (VAVIARFMPR…LTRPVAVTVL (89 aa)).

As to quaternary structure, homodimer.

Its function is as follows. Putative monooygenase that might be involved in antibiotic biosynthesis, or may act as reactive oxygen species scavenger that could help in evading host defenses. This is Putative monooxygenase Rv0793 from Mycobacterium tuberculosis (strain ATCC 25618 / H37Rv).